The sequence spans 654 residues: Acetyl-coenzyme A synthetase (654 aa).

CoA-binding positions include 196-199 (RGGK) and threonine 316. ATP contacts are provided by residues 392 to 394 (GEP), 416 to 421 (DTWWQT), aspartate 507, and arginine 522. Residue serine 530 coordinates CoA. Residue arginine 533 coordinates ATP. Positions 544 and 549 each coordinate Mg(2+). An N6-acetyllysine modification is found at lysine 619.

It belongs to the ATP-dependent AMP-binding enzyme family. The cofactor is Mg(2+). In terms of processing, acetylated. Deacetylation by the SIR2-homolog deacetylase activates the enzyme.

It carries out the reaction acetate + ATP + CoA = acetyl-CoA + AMP + diphosphate. Its function is as follows. Catalyzes the conversion of acetate into acetyl-CoA (AcCoA), an essential intermediate at the junction of anabolic and catabolic pathways. AcsA undergoes a two-step reaction. In the first half reaction, AcsA combines acetate with ATP to form acetyl-adenylate (AcAMP) intermediate. In the second half reaction, it can then transfer the acetyl group from AcAMP to the sulfhydryl group of CoA, forming the product AcCoA. This is Acetyl-coenzyme A synthetase from Chromobacterium violaceum (strain ATCC 12472 / DSM 30191 / JCM 1249 / CCUG 213 / NBRC 12614 / NCIMB 9131 / NCTC 9757 / MK).